The chain runs to 483 residues: V-type proton ATPase subunit H (483 aa).

S483 is modified (phosphoserine).

Belongs to the V-ATPase H subunit family. As to quaternary structure, V-ATPase is a heteromultimeric enzyme made up of two complexes: the ATP-hydrolytic V1 complex and the proton translocation V0 complex. The V1 complex consists of three catalytic AB heterodimers that form a heterohexamer, three peripheral stalks each consisting of EG heterodimers, one central rotor including subunits D and F, and the regulatory subunits C and H. The proton translocation complex V0 consists of the proton transport subunit a, a ring of proteolipid subunits c9c'', rotary subunit d, subunits e and f, and the accessory subunits ATP6AP1/Ac45 and ATP6AP2/PRR. Interacts with AP2M1.

Its subcellular location is the cytoplasmic vesicle. The protein resides in the clathrin-coated vesicle membrane. Its function is as follows. Subunit of the V1 complex of vacuolar(H+)-ATPase (V-ATPase), a multisubunit enzyme composed of a peripheral complex (V1) that hydrolyzes ATP and a membrane integral complex (V0) that translocates protons. V-ATPase is responsible for acidifying and maintaining the pH of intracellular compartments and in some cell types, is targeted to the plasma membrane, where it is responsible for acidifying the extracellular environment. Subunit H is essential for V-ATPase activity, but not for the assembly of the complex. Involved in the endocytosis mediated by clathrin-coated pits, required for the formation of endosomes. The sequence is that of V-type proton ATPase subunit H (ATP6V1H) from Sus scrofa (Pig).